Consider the following 221-residue polypeptide: Probable glutathione S-transferase (221 aa).

Residues 4 to 83 (EEVILLDFWP…YIEEVWKDKA (80 aa)) enclose the GST N-terminal domain. Residues serine 14, lysine 41, isoleucine 55, and 67 to 68 (ES) each bind glutathione. Residues 90–214 (DPYDRAQARF…PKVLEFVKVL (125 aa)) form the GST C-terminal domain.

This sequence belongs to the GST superfamily. HSP26 family. As to expression, root tip-specific expression.

It catalyses the reaction RX + glutathione = an S-substituted glutathione + a halide anion + H(+). The protein is Probable glutathione S-transferase of Nicotiana tabacum (Common tobacco).